A 133-amino-acid polypeptide reads, in one-letter code: Ubiquitin-like FUBI-ribosomal protein eS30 fusion protein (133 aa).

In terms of domain architecture, Ubiquitin-like spans 1-74; it reads MQLFVRAQEL…LEVAGRMLGG (74 aa). The interval 84–110 is disordered; that stretch reads GKVRGQTPKVAKQEKKKKKTGRAKRRM. Over residues 97-110 the composition is skewed to basic residues; that stretch reads EKKKKKTGRAKRRM. The residue at position 125 (K125) is an N6-succinyllysine.

It in the N-terminal section; belongs to the ubiquitin family. This sequence in the C-terminal section; belongs to the eukaryotic ribosomal protein eS30 family. Component of the 40S subunit of the ribosome. In terms of processing, FUBI is cleaved from ribosomal protein S30 by the deubiquitinase USP36 before the assembly of ribosomal protein S30 into pre-40S ribosomal particles. FUBI removal from ribosomal protein S30 is a crucial event for the final maturation of pre-40S particles.

It localises to the cytoplasm. The protein resides in the nucleus. Its function is as follows. May have pro-apoptotic activity. Functionally, component of the 40S subunit of the ribosome. Contributes to the assembly and function of 40S ribosomal subunits. The protein is Ubiquitin-like FUBI-ribosomal protein eS30 fusion protein of Homo sapiens (Human).